The sequence spans 395 residues: Capsid protein (395 aa).

Residues 1 to 41 (MARKYAKRSKSRPRTARRSPKSRSRPRSRAPRRKAPSRPRI) are compositionally biased toward basic residues. The disordered stretch occupies residues 1-51 (MARKYAKRSKSRPRTARRSPKSRSRPRSRAPRRKAPSRPRIQRVNPVRRPM). Positions 2-9 (ARKYAKRS) match the Nuclear localization signal motif.

The protein localises to the host nucleus. It localises to the virion. Self-assembles to form the virion icosahedral capsid. This is Capsid protein from Chaetoceros setoense (Chaetoceros setoense DNA virus).